Consider the following 634-residue polypeptide: DNA-directed RNA polymerase subunit gamma (634 aa).

Positions 74, 76, 89, and 92 each coordinate Zn(2+). Mg(2+) is bound by residues Asp471, Asp473, and Asp475.

The protein belongs to the RNA polymerase beta' chain family. RpoC1 subfamily. In terms of assembly, in cyanobacteria the RNAP catalytic core is composed of 2 alpha, 1 beta, 1 beta', 1 gamma and 1 omega subunit. When a sigma factor is associated with the core the holoenzyme is formed, which can initiate transcription. It depends on Mg(2+) as a cofactor. The cofactor is Zn(2+).

It carries out the reaction RNA(n) + a ribonucleoside 5'-triphosphate = RNA(n+1) + diphosphate. In terms of biological role, DNA-dependent RNA polymerase catalyzes the transcription of DNA into RNA using the four ribonucleoside triphosphates as substrates. The chain is DNA-directed RNA polymerase subunit gamma from Synechococcus sp. (strain CC9311).